The sequence spans 312 residues: Glyoxylate/hydroxypyruvate reductase A (312 aa).

R227 is an active-site residue. The Proton donor role is filled by H275.

This sequence belongs to the D-isomer specific 2-hydroxyacid dehydrogenase family. GhrA subfamily.

The protein localises to the cytoplasm. The catalysed reaction is glycolate + NADP(+) = glyoxylate + NADPH + H(+). It catalyses the reaction (R)-glycerate + NAD(+) = 3-hydroxypyruvate + NADH + H(+). It carries out the reaction (R)-glycerate + NADP(+) = 3-hydroxypyruvate + NADPH + H(+). Catalyzes the NADPH-dependent reduction of glyoxylate and hydroxypyruvate into glycolate and glycerate, respectively. In Klebsiella pneumoniae subsp. pneumoniae (strain ATCC 700721 / MGH 78578), this protein is Glyoxylate/hydroxypyruvate reductase A.